We begin with the raw amino-acid sequence, 1418 residues long: Alpha-latrotoxin-Lhe1a (1418 aa).

The N-terminal stretch at M1–R20 is a signal peptide. Positions R17–R20 are furin-like endopeptidase recognition region. Positions V238–L257 are helix H8 is the probable transmembrane region of the tetrameric pore inserted in the target cell membrane. Cysteines 413 and 1066 form a disulfide. ANK repeat units lie at residues L458–D489, Q490–Q521, K525–S554, F559–E589, D593–A622, K626–A656, N660–V690, G695–V723, G729–Q758, E762–A791, S795–D824, N828–D857, N862–T891, N895–I924, N928–W957, E971–N1003, I1004–G1033, K1035–H1064, N1068–R1097, R1101–I1131, D1137–I1166, and Y1170–R1199. Residues E1026–D1032 form a 4C4.1 epitope region. Positions K1196–R1199 are furin-like endopeptidase recognition region. Residues E1200–I1418 constitute a propeptide that is removed on maturation.

It belongs to the cationic peptide 01 (latrotoxin) family. 03 (alpha-latrotoxin) subfamily. Homotetramer in membranes. Post-translationally, processed by furin-like proteases at both the N- and C-termini. As to expression, expressed in venom gland, cephalothorax, and abdomen tissues from both males and females.

It localises to the secreted. It is found in the target cell membrane. In terms of biological role, presynaptic neurotoxin that causes massive release of neurotransmitters from vertebrate (but not invertebrate) nerve terminals and endocrine cells via a complex mechanism involving activation of receptor(s) and toxin insertion into the plasma membrane with subsequent pore formation. Binds to neurexin-1-alpha (NRXN1) in a calcium dependent manner, adhesion G protein-coupled receptor L1 (ADGRL1, also termed latrophilin-1 and calcium-independent receptor of latrotoxin (CIRL)), and receptor-type tyrosine-protein phosphatase S (PTPRS), also termed PTP sigma. NRXN1 and PTPRS are suggested to provide a platform for binding and subsequent pore formation events. In contrast, binding to ADGRL1 does not involve oligomerization and channel formation, but direct downstream stimulation of the synaptic fusion machinery. This chain is Alpha-latrotoxin-Lhe1a, found in Latrodectus hesperus (Western black widow spider).